The chain runs to 393 residues: tRNA(Met) cytidine acetate ligase (393 aa).

Residues Gly81, Asn142, and Arg167 each contribute to the ATP site.

It belongs to the TmcAL family.

Its subcellular location is the cytoplasm. The catalysed reaction is cytidine(34) in elongator tRNA(Met) + acetate + ATP = N(4)-acetylcytidine(34) in elongator tRNA(Met) + AMP + diphosphate. Functionally, catalyzes the formation of N(4)-acetylcytidine (ac(4)C) at the wobble position of elongator tRNA(Met), using acetate and ATP as substrates. First activates an acetate ion to form acetyladenylate (Ac-AMP) and then transfers the acetyl group to tRNA to form ac(4)C34. This Bacillus cereus (strain AH820) protein is tRNA(Met) cytidine acetate ligase.